The primary structure comprises 306 residues: Curved DNA-binding protein (306 aa).

In terms of domain architecture, J spans 5-69 (DYYAIMGVKP…QRRAEYDQMW (65 aa)).

The protein resides in the cytoplasm. It localises to the nucleoid. Its function is as follows. DNA-binding protein that preferentially recognizes a curved DNA sequence. It is probably a functional analog of DnaJ; displays overlapping activities with DnaJ, but functions under different conditions, probably acting as a molecular chaperone in an adaptive response to environmental stresses other than heat shock. Lacks autonomous chaperone activity; binds native substrates and targets them for recognition by DnaK. Its activity is inhibited by the binding of CbpM. This chain is Curved DNA-binding protein, found in Escherichia coli O157:H7.